Here is a 174-residue protein sequence, read N- to C-terminus: Crossover junction endodeoxyribonuclease RuvC (174 aa).

Active-site residues include Asp8, Glu69, and Asp141. Asp8, Glu69, and Asp141 together coordinate Mg(2+).

The protein belongs to the RuvC family. In terms of assembly, homodimer which binds Holliday junction (HJ) DNA. The HJ becomes 2-fold symmetrical on binding to RuvC with unstacked arms; it has a different conformation from HJ DNA in complex with RuvA. In the full resolvosome a probable DNA-RuvA(4)-RuvB(12)-RuvC(2) complex forms which resolves the HJ. Requires Mg(2+) as cofactor.

Its subcellular location is the cytoplasm. The enzyme catalyses Endonucleolytic cleavage at a junction such as a reciprocal single-stranded crossover between two homologous DNA duplexes (Holliday junction).. Functionally, the RuvA-RuvB-RuvC complex processes Holliday junction (HJ) DNA during genetic recombination and DNA repair. Endonuclease that resolves HJ intermediates. Cleaves cruciform DNA by making single-stranded nicks across the HJ at symmetrical positions within the homologous arms, yielding a 5'-phosphate and a 3'-hydroxyl group; requires a central core of homology in the junction. The consensus cleavage sequence is 5'-(A/T)TT(C/G)-3'. Cleavage occurs on the 3'-side of the TT dinucleotide at the point of strand exchange. HJ branch migration catalyzed by RuvA-RuvB allows RuvC to scan DNA until it finds its consensus sequence, where it cleaves and resolves the cruciform DNA. The sequence is that of Crossover junction endodeoxyribonuclease RuvC from Xanthomonas axonopodis pv. citri (strain 306).